Here is a 450-residue protein sequence, read N- to C-terminus: Deoxyguanosinetriphosphate triphosphohydrolase-like protein (450 aa).

The region spanning 61-201 is the HD domain; the sequence is RLTHSLEVAQ…AKLAPELNAD (141 aa).

This sequence belongs to the dGTPase family. Type 2 subfamily.

This chain is Deoxyguanosinetriphosphate triphosphohydrolase-like protein, found in Pasteurella multocida (strain Pm70).